A 360-amino-acid chain; its full sequence is UDP-N-acetylglucosamine--N-acetylmuramyl-(pentapeptide) pyrophosphoryl-undecaprenol N-acetylglucosamine transferase (360 aa).

UDP-N-acetyl-alpha-D-glucosamine is bound by residues 11–13, Asn-117, Arg-160, Ser-192, and Gln-294; that span reads TGG.

It belongs to the glycosyltransferase 28 family. MurG subfamily.

The protein localises to the cell inner membrane. The catalysed reaction is di-trans,octa-cis-undecaprenyl diphospho-N-acetyl-alpha-D-muramoyl-L-alanyl-D-glutamyl-meso-2,6-diaminopimeloyl-D-alanyl-D-alanine + UDP-N-acetyl-alpha-D-glucosamine = di-trans,octa-cis-undecaprenyl diphospho-[N-acetyl-alpha-D-glucosaminyl-(1-&gt;4)]-N-acetyl-alpha-D-muramoyl-L-alanyl-D-glutamyl-meso-2,6-diaminopimeloyl-D-alanyl-D-alanine + UDP + H(+). Its pathway is cell wall biogenesis; peptidoglycan biosynthesis. Cell wall formation. Catalyzes the transfer of a GlcNAc subunit on undecaprenyl-pyrophosphoryl-MurNAc-pentapeptide (lipid intermediate I) to form undecaprenyl-pyrophosphoryl-MurNAc-(pentapeptide)GlcNAc (lipid intermediate II). This Rickettsia felis (strain ATCC VR-1525 / URRWXCal2) (Rickettsia azadi) protein is UDP-N-acetylglucosamine--N-acetylmuramyl-(pentapeptide) pyrophosphoryl-undecaprenol N-acetylglucosamine transferase.